Here is a 273-residue protein sequence, read N- to C-terminus: Large ribosomal subunit protein uL2cz/uL2cy (273 aa).

Disordered regions lie at residues 1–25 (MAIH…VKSN) and 224–273 (NPVD…RRRK).

The protein belongs to the universal ribosomal protein uL2 family. Part of the 50S ribosomal subunit.

Its subcellular location is the plastid. The protein localises to the chloroplast. This is Large ribosomal subunit protein uL2cz/uL2cy (rpl2-A) from Phalaenopsis aphrodite subsp. formosana (Moth orchid).